A 205-amino-acid polypeptide reads, in one-letter code: Thymidylate kinase (205 aa).

13 to 20 is a binding site for ATP; sequence GIDGSGKS.

This sequence belongs to the thymidylate kinase family.

The catalysed reaction is dTMP + ATP = dTDP + ADP. Phosphorylation of dTMP to form dTDP in both de novo and salvage pathways of dTTP synthesis. This is Thymidylate kinase from Leptospira borgpetersenii serovar Hardjo-bovis (strain L550).